The primary structure comprises 155 residues: Fibroblast growth factor 2 (155 aa).

The propeptide occupies 1–9 (MAAGSITTL). The tract at residues 1–20 (MAAGSITTLPALPEDGGSSA) is disordered. Asn36 lines the heparin pocket. The Cell attachment site; atypical signature appears at 46–48 (DGR). Residue Tyr82 is modified to Phosphotyrosine; by TEC. The Cell attachment site; atypical signature appears at 88–90 (DGR). Lys95 is covalently cross-linked (Glycyl lysine isopeptide (Lys-Gly) (interchain with G-Cter in SUMO1)). The heparin-binding stretch occupies residues 128 to 144 (KRTGQYKLGPKTGPGQK).

It belongs to the heparin-binding growth factors family. As to quaternary structure, monomer. Homodimer. Interacts with FGFR1, FGFR2, FGFR3 and FGFR4. Affinity between fibroblast growth factors (FGFs) and their receptors is increased by heparan sulfate glycosaminoglycans that function as coreceptors. Interacts with CSPG4, FGFBP1 and TEC. Found in a complex with FGFBP1, FGF1 and FGF2. Interacts with FGFBP3. Interacts with integrin ITGAV:ITGB3; the interaction is required for FGF2 signaling. Interacts with SNORC (via the extracellular domain). Interacts with glypican GPC3. Post-translationally, phosphorylation at Tyr-82 regulates FGF2 unconventional secretion.

It localises to the secreted. The protein resides in the nucleus. Functionally, acts as a ligand for FGFR1, FGFR2, FGFR3 and FGFR4. Also acts as an integrin ligand which is required for FGF2 signaling. Binds to integrin ITGAV:ITGB3. Plays an important role in the regulation of cell survival, cell division, cell differentiation and cell migration. Functions as a potent mitogen in vitro. Can induce angiogenesis. Mediates phosphorylation of ERK1/2 and thereby promotes retinal lens fiber differentiation. This Ovis aries (Sheep) protein is Fibroblast growth factor 2 (FGF2).